The primary structure comprises 511 residues: 2-isopropylmalate synthase (511 aa).

Residues 4-266 (IRIFDTTLRD…ETGIDLSQLY (263 aa)) enclose the Pyruvate carboxyltransferase domain. Positions 13, 201, 203, and 237 each coordinate Mn(2+). The segment at 391–511 (VLEKIRVVSG…IAANARAQKN (121 aa)) is regulatory domain.

The protein belongs to the alpha-IPM synthase/homocitrate synthase family. LeuA type 1 subfamily. In terms of assembly, homodimer. It depends on Mn(2+) as a cofactor.

It localises to the cytoplasm. The catalysed reaction is 3-methyl-2-oxobutanoate + acetyl-CoA + H2O = (2S)-2-isopropylmalate + CoA + H(+). Its pathway is amino-acid biosynthesis; L-leucine biosynthesis; L-leucine from 3-methyl-2-oxobutanoate: step 1/4. Its function is as follows. Catalyzes the condensation of the acetyl group of acetyl-CoA with 3-methyl-2-oxobutanoate (2-ketoisovalerate) to form 3-carboxy-3-hydroxy-4-methylpentanoate (2-isopropylmalate). This Acetivibrio thermocellus (strain ATCC 27405 / DSM 1237 / JCM 9322 / NBRC 103400 / NCIMB 10682 / NRRL B-4536 / VPI 7372) (Clostridium thermocellum) protein is 2-isopropylmalate synthase.